Consider the following 292-residue polypeptide: ATP synthase gamma chain (292 aa).

The protein belongs to the ATPase gamma chain family. As to quaternary structure, F-type ATPases have 2 components, CF(1) - the catalytic core - and CF(0) - the membrane proton channel. CF(1) has five subunits: alpha(3), beta(3), gamma(1), delta(1), epsilon(1). CF(0) has three main subunits: a, b and c.

It is found in the cell membrane. Functionally, produces ATP from ADP in the presence of a proton gradient across the membrane. The gamma chain is believed to be important in regulating ATPase activity and the flow of protons through the CF(0) complex. This Streptococcus thermophilus (strain CNRZ 1066) protein is ATP synthase gamma chain.